The primary structure comprises 980 residues: Thrombospondin-4 (980 aa).

The first 42 residues, M1 to A42, serve as a signal peptide directing secretion. One can recognise a Laminin G-like domain in the interval Q43–G210. Residues P304 to S343 enclose the EGF-like 1 domain. Intrachain disulfides connect C308/C319, C313/C328, C331/C342, C348/C359, C353/C368, C371/C395, C401/C412, C406/C421, C424/C436, C442/C456, C450/C466, C468/C480, C496/C501, C506/C526, C542/C562, C565/C585, C601/C621, C624/C644, C662/C682, C702/C722, and C738/C959. Residues D344 to Q381 enclose the EGF-like 2; calcium-binding domain. An EGF-like 3; calcium-binding domain is found at D397–R434. In terms of domain architecture, EGF-like 4 spans T438–G481. TSP type-3 repeat units follow at residues K482–Q514, E515–Q550, R551–Q573, K574–Q609, Q610–Q632, S633–Q670, L671–Q710, and E711–L746. The segment at N596–M691 is disordered. Positions P605 to D615 are enriched in basic and acidic residues. N631 is a glycosylation site (N-linked (GlcNAc...) asparagine). Residues T659–L671 are compositionally biased toward polar residues. Acidic residues predominate over residues G679–G690. One can recognise a TSP C-terminal domain in the interval R750–P964. N960 is a glycosylation site (N-linked (GlcNAc...) asparagine).

Belongs to the thrombospondin family. As to quaternary structure, homopentamer; disulfide-linked. Interacts with PTBP3. Interacts (via EGF-like 3; calcium-binding domain) with ATF6 and facilitates its processing, activation and nuclear translocation. Interacts with NOTCH1. As to expression, mainly expressed in astrocytes, and in ressponse to peripheral nerve injury, significantly up-regulated in the dorsal spinal cord (at protein level).

Its subcellular location is the endoplasmic reticulum. It localises to the sarcoplasmic reticulum. The protein localises to the secreted. The protein resides in the extracellular space. It is found in the extracellular matrix. Functionally, adhesive glycoprotein that mediates cell-to-cell and cell-to-matrix interactions and is involved in various processes including cellular proliferation, migration, adhesion and attachment, inflammatory response to CNS injury, regulation of vascular inflammation and adaptive responses of the heart to pressure overload and in myocardial function and remodeling. Binds to structural extracellular matrix (ECM) proteins and modulates the ECM in response to tissue damage, contributing to cardioprotective and adaptive ECM remodeling. Plays a role in ER stress response, via its interaction with the activating transcription factor 6 alpha (ATF6) which produces adaptive ER stress response factors and protects myocardium from pressure overload. May contribute to spinal presynaptic hypersensitivity and neuropathic pain states after peripheral nerve injury. May play a role in regulating protective astrogenesis from the subventricular zone (SVZ) niche after injury in a NOTCH1-dependent manner. The chain is Thrombospondin-4 (Thbs4) from Rattus norvegicus (Rat).